Here is a 113-residue protein sequence, read N- to C-terminus: UPF0339 protein MS1092 (113 aa).

2 repeat units span residues 11 to 59 (AKDG…NFEF) and 62 to 110 (NKNG…IKDI).

This sequence belongs to the UPF0339 family. Duplicated subfamily.

This Mannheimia succiniciproducens (strain KCTC 0769BP / MBEL55E) protein is UPF0339 protein MS1092.